A 98-amino-acid chain; its full sequence is MSAHQVKLTPKDILEKEFKVSIRGYNQDEVDQFLDLIIKDYEAFQQEIDELRQENARLKRQVEELQKRPAMSAGTTNYDILQRLSNLEKHVFGRKLYE.

The stretch at 34-71 forms a coiled coil; it reads LDLIIKDYEAFQQEIDELRQENARLKRQVEELQKRPAM.

It belongs to the GpsB family. As to quaternary structure, forms polymers through the coiled coil domains. Interacts with PBP1, MreC and EzrA.

It localises to the cytoplasm. In terms of biological role, divisome component that associates with the complex late in its assembly, after the Z-ring is formed, and is dependent on DivIC and PBP2B for its recruitment to the divisome. Together with EzrA, is a key component of the system that regulates PBP1 localization during cell cycle progression. Its main role could be the removal of PBP1 from the cell pole after pole maturation is completed. Also contributes to the recruitment of PBP1 to the division complex. Not essential for septum formation. This Geobacillus kaustophilus (strain HTA426) protein is Cell cycle protein GpsB.